Consider the following 60-residue polypeptide: UI (60 aa).

Low complexity predominate over residues 1 to 14 (AAAAGDSAASDLLG). The segment at 1–22 (AAAAGDSAASDLLGDNILRSED) is disordered. Valine amide is present on Val60.

The protein belongs to the sauvagine/corticotropin-releasing factor/urotensin I family.

The protein resides in the secreted. Functionally, urotensin is found in the teleost caudal neurosecretory system. It has a suggested role in osmoregulation and as a corticotropin-releasing factor. The non-hormonal portion of this precursor may be a urotensin binding protein, urophysin. The polypeptide is UI (Platichthys flesus (European flounder)).